Here is a 436-residue protein sequence, read N- to C-terminus: MRQALPLVTRQGDRIAIVSGLRTPFARQATAFHGIPAVDLGKMVVGELLARSEIPADAIEQLVFGQVVQMPEAPNIAREIVLGTGMNVHTDAYSVSRACATSFQAVANVAESLMAGTIRAGIAGGADSSSVLPIGVSKALARVLVDVNKARTTRQRLTLFSRLRLRDLLPVPPAVAEYSTGLRMGDTAEQMAKTYGITREQQDALAHRSHQRAAQAWAEGKLAEEVMTTYVPPYKNPFAEDNNIRGASTLADYAKLRPAFDRKHGSVTAANSTPLTDGAAAVILMTESRAKELGLRPLGYLRTYAFTAIDVWQDMLLGPAWSTPLALERAGLTMADLTLFDMHEAFAAQTLANLQLLGSERFAREVLGCAQATGEVDDAKFNVLGGSIAYGHPFAATGARMITQTLHELRRRGGGFGLVTACAAGGLGAAMVLEAE.

C99 serves as the catalytic Acyl-thioester intermediate. Active-site proton acceptor residues include H392 and C422.

Belongs to the thiolase-like superfamily. Thiolase family. In terms of assembly, heterotetramer of two alpha chains (FadJ) and two beta chains (FadI).

It localises to the cytoplasm. It catalyses the reaction an acyl-CoA + acetyl-CoA = a 3-oxoacyl-CoA + CoA. It participates in lipid metabolism; fatty acid beta-oxidation. Its function is as follows. Catalyzes the final step of fatty acid oxidation in which acetyl-CoA is released and the CoA ester of a fatty acid two carbons shorter is formed. This is 3-ketoacyl-CoA thiolase from Salmonella typhimurium (strain LT2 / SGSC1412 / ATCC 700720).